Reading from the N-terminus, the 331-residue chain is Glycerol-3-phosphate dehydrogenase [NAD(P)+] (331 aa).

NADPH is bound by residues W13, R33, and K103. Sn-glycerol 3-phosphate-binding residues include K103, G131, and T133. A135 serves as a coordination point for NADPH. K187, D240, S250, R251, and N252 together coordinate sn-glycerol 3-phosphate. The active-site Proton acceptor is K187. R251 contributes to the NADPH binding site. NADPH-binding residues include V275 and E277.

This sequence belongs to the NAD-dependent glycerol-3-phosphate dehydrogenase family.

Its subcellular location is the cytoplasm. It catalyses the reaction sn-glycerol 3-phosphate + NAD(+) = dihydroxyacetone phosphate + NADH + H(+). The enzyme catalyses sn-glycerol 3-phosphate + NADP(+) = dihydroxyacetone phosphate + NADPH + H(+). The protein operates within membrane lipid metabolism; glycerophospholipid metabolism. Its function is as follows. Catalyzes the reduction of the glycolytic intermediate dihydroxyacetone phosphate (DHAP) to sn-glycerol 3-phosphate (G3P), the key precursor for phospholipid synthesis. This is Glycerol-3-phosphate dehydrogenase [NAD(P)+] from Novosphingobium aromaticivorans (strain ATCC 700278 / DSM 12444 / CCUG 56034 / CIP 105152 / NBRC 16084 / F199).